The following is a 607-amino-acid chain: Glutamine--fructose-6-phosphate aminotransferase [isomerizing] (607 aa).

The Nucleophile; for GATase activity role is filled by C2. Residues 2 to 217 (CGIIGILGKK…DGDWAVLTRE (216 aa)) enclose the Glutamine amidotransferase type-2 domain. 2 consecutive SIS domains span residues 277–422 (TVRS…QRGS) and 455–597 (ICRD…VDQP). The For Fru-6P isomerization activity role is filled by K602.

In terms of assembly, homodimer.

The protein localises to the cytoplasm. The enzyme catalyses D-fructose 6-phosphate + L-glutamine = D-glucosamine 6-phosphate + L-glutamate. In terms of biological role, catalyzes the first step in hexosamine metabolism, converting fructose-6P into glucosamine-6P using glutamine as a nitrogen source. The protein is Glutamine--fructose-6-phosphate aminotransferase [isomerizing] of Bartonella quintana (strain Toulouse) (Rochalimaea quintana).